The chain runs to 643 residues: 1-deoxy-D-xylulose-5-phosphate synthase (643 aa).

Thiamine diphosphate is bound by residues H78 and 119-121 (AHS). D150 contacts Mg(2+). Residues 151-152 (GS), N179, Y288, and E370 contribute to the thiamine diphosphate site. N179 is a Mg(2+) binding site.

Belongs to the transketolase family. DXPS subfamily. Homodimer. The cofactor is Mg(2+). Requires thiamine diphosphate as cofactor.

The catalysed reaction is D-glyceraldehyde 3-phosphate + pyruvate + H(+) = 1-deoxy-D-xylulose 5-phosphate + CO2. The protein operates within metabolic intermediate biosynthesis; 1-deoxy-D-xylulose 5-phosphate biosynthesis; 1-deoxy-D-xylulose 5-phosphate from D-glyceraldehyde 3-phosphate and pyruvate: step 1/1. Its function is as follows. Catalyzes the acyloin condensation reaction between C atoms 2 and 3 of pyruvate and glyceraldehyde 3-phosphate to yield 1-deoxy-D-xylulose-5-phosphate (DXP). The polypeptide is 1-deoxy-D-xylulose-5-phosphate synthase (Brucella abortus (strain S19)).